Here is a 460-residue protein sequence, read N- to C-terminus: Probable carboxylesterase 11 (460 aa).

Composition is skewed to polar residues over residues glutamine 26–aspartate 35 and asparagine 132–alanine 145. 2 disordered regions span residues glutamine 26–proline 52 and asparagine 132–glycine 161. An Involved in the stabilization of the negatively charged intermediate by the formation of the oxyanion hole motif is present at residues histidine 173 to glycine 175. Active-site residues include serine 289, aspartate 392, and histidine 422.

Belongs to the 'GDXG' lipolytic enzyme family. As to expression, expressed in roots, leaves, stems, flowers and siliques.

It carries out the reaction a carboxylic ester + H2O = an alcohol + a carboxylate + H(+). Its function is as follows. Carboxylesterase acting on esters with varying acyl chain length. This chain is Probable carboxylesterase 11 (CXE11), found in Arabidopsis thaliana (Mouse-ear cress).